We begin with the raw amino-acid sequence, 523 residues long: SWI/SNF and RSC complexes subunit arp9 (523 aa).

The segment covering 56–72 (INMEDPNVKTDETKVET) has biased composition (basic and acidic residues). Disordered stretches follow at residues 56 to 92 (INME…KNMG) and 319 to 339 (QKER…NTDV). A compositionally biased stretch (polar residues) spans 79-92 (QPSNSNVTEEKNMG). The span at 319–336 (QKEREKNGESEKDEKPDN) shows a compositional bias: basic and acidic residues.

This sequence belongs to the actin family. As to quaternary structure, component of the RSC complex composed of at least arp9, arp42, rsc1, rsc4, rsc7, rsc9, rsc58, sfh1, snf21, ssr1, ssr2, ssr3 and ssr4. The complex interacts with histone and histone variant components of centromeric chromatin. Component of the SWI/SNF global transcription activator complex composed of at least arp9, arp42, snf5, snf22, snf30, sbf59, sol1, ssr1, ssr2, ssr3, ssr4 and tfg3.

It localises to the cytoplasm. It is found in the nucleus. In terms of biological role, component of the chromatin structure remodeling complex (RSC), which is involved in transcription regulation and nucleosome positioning. Controls particularly membrane and organelle development genes. Part of the SWI/SNF complex, an ATP-dependent chromatin remodeling complex, required for the positive and negative regulation of gene expression of a large number of genes. It changes chromatin structure by altering DNA-histone contacts within a nucleosome, leading eventually to a change in nucleosome position, thus facilitating or repressing binding of gene-specific transcription factors. This Schizosaccharomyces pombe (strain 972 / ATCC 24843) (Fission yeast) protein is SWI/SNF and RSC complexes subunit arp9 (arp9).